The chain runs to 72 residues: Osmotically-inducible lipoprotein B (72 aa).

Residues methionine 1–alanine 23 form the signal peptide. Residue cysteine 24 is the site of N-palmitoyl cysteine attachment. Cysteine 24 is lipidated: S-diacylglycerol cysteine.

Its subcellular location is the cell membrane. Its function is as follows. Provides resistance to osmotic stress. May be important for stationary-phase survival. The protein is Osmotically-inducible lipoprotein B (osmB) of Escherichia coli O157:H7.